We begin with the raw amino-acid sequence, 478 residues long: Septin-4 (478 aa).

Residues 38 to 115 (VKDFSGNESC…RSPWGKLDPY (78 aa)) are disordered. Positions 95–108 (APAPLSPSARPRSP) are enriched in low complexity. Residues Ser117 and Ser118 each carry the phosphoserine modification. Residues 141–414 (KGFDFTLMVA…ENYRAQCIQS (274 aa)) form the Septin-type G domain. The G1 motif stretch occupies residues 151–158 (GESGLGKS). Residues 151–158 (GESGLGKS) and Thr185 each bind GTP. The interval 208-211 (DTPG) is G3 motif. Residues 289-292 (AKAD) are G4 motif. 290–298 (KADTLTPPE) serves as a coordination point for GTP. Position 325 is a phosphoserine (Ser325). GTP is bound by residues Gly348 and Arg363. The segment at 425–448 (RNKLTRESGTDLPIPAVPPGTDPE) is disordered. Ser432 carries the post-translational modification Phosphoserine. Thr434 is modified (phosphothreonine). Residues 446 to 478 (DPETEKLIREKDEELRRMQEMLHKIQKQMKETY) are a coiled coil.

This sequence belongs to the TRAFAC class TrmE-Era-EngA-EngB-Septin-like GTPase superfamily. Septin GTPase family. In terms of assembly, septins polymerize into heterooligomeric protein complexes that form filaments, and can associate with cellular membranes, actin filaments and microtubules. GTPase activity is required for filament formation. Interacts with SEPTIN8. Component of a septin core octameric complex consisting of SEPTIN12, SEPTIN7, SEPTIN6 and SEPTIN2 or SEPTIN4 in the order 12-7-6-2-2-6-7-12 or 12-7-6-4-4-6-7-12. Interacts with SEPTIN14 (via C-terminus). Interacts with DYRK1A. Interacts with SLC6A3/DAT and SNCA/alpha-synuclein. Interacts with STX1A; in the striatum. Interacts with XIAP (via BIR3 domain) following the induction of apoptosis. Interacts with AREL1 (via HECT domain); in the cytoplasm following induction of apoptosis. Ubiquitinated by AREL1. In terms of processing, phosphorylated by DYRK1A.

It localises to the cytoplasm. The protein resides in the cell projection. It is found in the cilium. The protein localises to the flagellum. Its subcellular location is the cytoplasmic vesicle. It localises to the secretory vesicle. The protein resides in the axon. It is found in the dendrite. The protein localises to the perikaryon. Its subcellular location is the synapse. Filament-forming cytoskeletal GTPase. Pro-apoptotic protein involved in LGR5-positive intestinal stem cell and Paneth cell expansion in the intestines, via its interaction with XIAP. May also play a role in the regulation of cell fate in the intestine. Positive regulator of apoptosis involved in hematopoietic stem cell homeostasis; via its interaction with XIAP. Negative regulator of repair and hair follicle regeneration in response to injury, due to inhibition of hair follicle stem cell proliferation, potentially via its interaction with XIAP. Plays an important role in male fertility and sperm motility. During spermiogenesis, essential for the establishment of the annulus (a fibrous ring structure connecting the midpiece and the principal piece of the sperm flagellum) which is a requisite for the structural and mechanical integrity of the sperm. Involved in the migration of cortical neurons and the formation of neuron leading processes during embryonic development. Required for dopaminergic metabolism in presynaptic autoreceptors; potentially via activity as a presynaptic scaffold protein. This chain is Septin-4, found in Pongo abelii (Sumatran orangutan).